The chain runs to 152 residues: Small ribosomal subunit protein uS8m (152 aa).

It belongs to the universal ribosomal protein uS8 family.

It is found in the mitochondrion. The protein is Small ribosomal subunit protein uS8m (mrps8) of Dictyostelium discoideum (Social amoeba).